A 277-amino-acid polypeptide reads, in one-letter code: Energy-coupling factor transporter transmembrane protein EcfT (277 aa).

A run of 6 helical transmembrane segments spans residues 39-59, 61-81, 85-105, 121-141, 163-183, and 254-274; these read ITIL…YAII, FFCF…WNGV, IGLI…GHVF, AIYI…MTVT, VPVD…PTLF, and SKYD…LLIF.

The protein belongs to the energy-coupling factor EcfT family. Forms a stable energy-coupling factor (ECF) transporter complex composed of 2 membrane-embedded substrate-binding proteins (S component), 2 ATP-binding proteins (A component) and 2 transmembrane proteins (T component). May be able to interact with more than 1 S component at a time.

It is found in the cell membrane. In terms of biological role, transmembrane (T) component of an energy-coupling factor (ECF) ABC-transporter complex. Unlike classic ABC transporters this ECF transporter provides the energy necessary to transport a number of different substrates. The chain is Energy-coupling factor transporter transmembrane protein EcfT from Lactobacillus helveticus (strain DPC 4571).